A 450-amino-acid polypeptide reads, in one-letter code: MITRFAPSPTGYMHVGNARTALICWLYARSKSGKFLLRIDDTDASRSEHKYIEGIKQDLDWLALDWDSCFQQSTRLERYQEVFDLLLDQGVIYPCYETQEELDMKRSMMLKMGLPPIYDRSALKMTEQEMQACSGRLPYFRLKIDQSREITWEDEVRGRVSFQAKNISDPIIKRTDGTYTYMFPSVVDDIDFAITHIIRGEDHVSNTATQICIFDILKAKVPVFVHLPLVHFRDAKISKRVGSDDIEIRHLRDIGMEPMAIKSYLARMGTSLPVEPQENHDVLVESFDIRTFNQAPIKFSLDDISRLNSRIVQCLSFDKVKDRFVQQGLECTEEFWYLIRDNVNTVEDVREWINICNSQITTAIDDKDRTFISEAKALLPDTELDEEVCKAWLQRIKETSNRSTRDVLLPLRLATTGVTTGPGLAQLLPFIGRAEVVRRLECASKGHNAN.

The 'HIGH' region motif lies at 7 to 17 (PSPTGYMHVGN). Positions 236 to 240 (KISKR) match the 'KMSKS' region motif. ATP is bound at residue lysine 239.

It belongs to the class-I aminoacyl-tRNA synthetase family. Glutamate--tRNA ligase type 1 subfamily. In terms of assembly, monomer.

The protein localises to the cytoplasm. It carries out the reaction tRNA(Glu) + L-glutamate + ATP = L-glutamyl-tRNA(Glu) + AMP + diphosphate. In terms of biological role, catalyzes the attachment of glutamate to tRNA(Glu) in a two-step reaction: glutamate is first activated by ATP to form Glu-AMP and then transferred to the acceptor end of tRNA(Glu). The sequence is that of Glutamate--tRNA ligase 1 from Anaplasma phagocytophilum (strain HZ).